A 91-amino-acid polypeptide reads, in one-letter code: Probable Fe(2+)-trafficking protein (91 aa).

The protein belongs to the Fe(2+)-trafficking protein family.

In terms of biological role, could be a mediator in iron transactions between iron acquisition and iron-requiring processes, such as synthesis and/or repair of Fe-S clusters in biosynthetic enzymes. The polypeptide is Probable Fe(2+)-trafficking protein (Cupriavidus metallidurans (strain ATCC 43123 / DSM 2839 / NBRC 102507 / CH34) (Ralstonia metallidurans)).